A 700-amino-acid chain; its full sequence is Centrosomal protein of 63 kDa (700 aa).

Methionine 1 bears the N-acetylmethionine mark. Coiled-coil stretches lie at residues 73-283 (KEVG…ETFI) and 343-533 (LQAE…MCKK). A phosphoserine mark is found at serine 278, lysine 488, and leucine 492. A disordered region spans residues 570 to 603 (QYKTGHHSPRGQTLDSIDPVARGPSPLSSHISPG). The segment covering 593–603 (PSPLSSHISPG) has biased composition (low complexity).

The protein belongs to the CEP63 family. Interacts with CEP152 and CDK1; these interactions recruit both ligands to centrosomes. Interacts with CDK2, CDK5RAP2, WDR62, CEP90, KIAA0753/moonraker and CCDC14. CEP63, CDK5RAP2, CEP152, WDR62 are proposed to form a stepwise assembled complex at the centrosome forming a ring near parental centrioles. Interacts with CCDC57; the interaction is required for their location to proximal end of centrioles. Interacts with FXR1; promoting its stabilization. Polyubiquitinated via 'Lys-48'-linked ubiquitin, leading to its degradation. Deubiquitinated by USP36, promoting its stabilization.

It localises to the cytoplasm. It is found in the cytoskeleton. The protein resides in the microtubule organizing center. Its subcellular location is the centrosome. The protein localises to the centriole. It localises to the centriolar satellite. Required for normal spindle assembly. Plays a key role in mother-centriole-dependent centriole duplication; the function also seems to involve CEP152, CDK5RAP2 and WDR62 through a stepwise assembled complex at the centrosome that recruits CDK2 required for centriole duplication. Reported to be required for centrosomal recruitment of CEP152; however, this function has been questioned. Also recruits CDK1 to centrosomes. Plays a role in DNA damage response. Following DNA damage, such as double-strand breaks (DSBs), is removed from centrosomes; this leads to the inactivation of spindle assembly and delay in mitotic progression. Promotes stabilization of FXR1 protein by inhibiting FXR1 ubiquitination. This Mus musculus (Mouse) protein is Centrosomal protein of 63 kDa.